The following is a 352-amino-acid chain: Ni-sirohydrochlorin a,c-diamide reductive cyclase complex, component CfbD (352 aa).

The protein belongs to the NifD/NifK/NifE/NifN family. As to quaternary structure, homodimer or monomer. The Ni-sirohydrochlorin a,c-diamide reductive cyclase complex is composed of a NifH homolog component CfbC and a NifD homolog component CfbD. Requires [4Fe-4S] cluster as cofactor.

The catalysed reaction is Ni-sirohydrochlorin a,c-diamide + 3 AH2 + ATP + H2O = 15,17(3)-seco-F430-17(3)-acid + 3 A + ADP + phosphate. Involved in the biosynthesis of the unique nickel-containing tetrapyrrole coenzyme F430, the prosthetic group of methyl-coenzyme M reductase (MCR), which plays a key role in methanogenesis and anaerobic methane oxidation. Catalyzes both the six-electron reduction of the tetrahydroporphyrin ring system and the gamma-lactamization of the c-acetamide side chain of Ni-sirohydrochlorin a,c-diamide to yield 15,17(3)-seco-F430-17(3)-acid (seco-F430), the last intermediate in the biosynthesis of the coenzyme F430. This Methanocaldococcus jannaschii (strain ATCC 43067 / DSM 2661 / JAL-1 / JCM 10045 / NBRC 100440) (Methanococcus jannaschii) protein is Ni-sirohydrochlorin a,c-diamide reductive cyclase complex, component CfbD.